Here is a 706-residue protein sequence, read N- to C-terminus: Elongation factor G (706 aa).

The tr-type G domain maps to 15–291 (LKTRNIGISA…GVLDYLASPV (277 aa)). GTP is bound by residues 24–31 (AHIDSGKT), 91–95 (DTPGH), and 145–148 (NKLD).

Belongs to the TRAFAC class translation factor GTPase superfamily. Classic translation factor GTPase family. EF-G/EF-2 subfamily.

It localises to the cytoplasm. In terms of biological role, catalyzes the GTP-dependent ribosomal translocation step during translation elongation. During this step, the ribosome changes from the pre-translocational (PRE) to the post-translocational (POST) state as the newly formed A-site-bound peptidyl-tRNA and P-site-bound deacylated tRNA move to the P and E sites, respectively. Catalyzes the coordinated movement of the two tRNA molecules, the mRNA and conformational changes in the ribosome. The polypeptide is Elongation factor G (Leptospira borgpetersenii serovar Hardjo-bovis (strain L550)).